A 700-amino-acid chain; its full sequence is Glycine--tRNA ligase beta subunit (700 aa).

Belongs to the class-II aminoacyl-tRNA synthetase family. Tetramer of two alpha and two beta subunits.

Its subcellular location is the cytoplasm. It catalyses the reaction tRNA(Gly) + glycine + ATP = glycyl-tRNA(Gly) + AMP + diphosphate. This Janthinobacterium sp. (strain Marseille) (Minibacterium massiliensis) protein is Glycine--tRNA ligase beta subunit.